The sequence spans 80 residues: MTRLVKALVIAYQRFFSARRPYRVCRFEPTCSEYMLQAIDRYHSRGILMGLARILRCQPFARGGYDPLPDHFTLKRNQPK.

This sequence belongs to the UPF0161 family.

Its subcellular location is the cell membrane. Could be involved in insertion of integral membrane proteins into the membrane. In Limosilactobacillus fermentum (strain NBRC 3956 / LMG 18251) (Lactobacillus fermentum), this protein is Putative membrane protein insertion efficiency factor.